Here is a 414-residue protein sequence, read N- to C-terminus: Putative truncated GMC-type inactive oxidoreductase R832 (414 aa).

The N-terminal stretch at 1-20 (MNPTKLFLVFVAFAFAIINA) is a signal peptide. Position 38 to 67 (38 to 67 (DYIIVGSGPGGSRAVQQCIAKGHKCTLVER)) interacts with FAD.

This sequence belongs to the GMC oxidoreductase family. Requires FAD as cofactor.

The chain is Putative truncated GMC-type inactive oxidoreductase R832 from Acanthamoeba polyphaga (Amoeba).